Consider the following 134-residue polypeptide: ATP synthase epsilon chain, chloroplastic (134 aa).

Belongs to the ATPase epsilon chain family. As to quaternary structure, F-type ATPases have 2 components, CF(1) - the catalytic core - and CF(0) - the membrane proton channel. CF(1) has five subunits: alpha(3), beta(3), gamma(1), delta(1), epsilon(1). CF(0) has three main subunits: a, b and c.

The protein resides in the plastid. The protein localises to the chloroplast thylakoid membrane. In terms of biological role, produces ATP from ADP in the presence of a proton gradient across the membrane. The protein is ATP synthase epsilon chain, chloroplastic of Pelargonium hortorum (Common geranium).